The following is a 949-amino-acid chain: Bifunctional glutamine synthetase adenylyltransferase/adenylyl-removing enzyme (949 aa).

Residues 1 to 450 form an adenylyl removase region; the sequence is MQNQGNKVLS…HFNATVGGTD (450 aa). The tract at residues 455–949 is adenylyl transferase; sequence NDHWTALFWN…IEIYNEILAI (495 aa).

The protein belongs to the GlnE family. It depends on Mg(2+) as a cofactor.

It carries out the reaction [glutamine synthetase]-O(4)-(5'-adenylyl)-L-tyrosine + phosphate = [glutamine synthetase]-L-tyrosine + ADP. The enzyme catalyses [glutamine synthetase]-L-tyrosine + ATP = [glutamine synthetase]-O(4)-(5'-adenylyl)-L-tyrosine + diphosphate. Functionally, involved in the regulation of glutamine synthetase GlnA, a key enzyme in the process to assimilate ammonia. When cellular nitrogen levels are high, the C-terminal adenylyl transferase (AT) inactivates GlnA by covalent transfer of an adenylyl group from ATP to specific tyrosine residue of GlnA, thus reducing its activity. Conversely, when nitrogen levels are low, the N-terminal adenylyl removase (AR) activates GlnA by removing the adenylyl group by phosphorolysis, increasing its activity. The regulatory region of GlnE binds the signal transduction protein PII (GlnB) which indicates the nitrogen status of the cell. This chain is Bifunctional glutamine synthetase adenylyltransferase/adenylyl-removing enzyme, found in Shewanella frigidimarina (strain NCIMB 400).